Reading from the N-terminus, the 471-residue chain is UDP-glycosyltransferase CGT (471 aa).

His24 (proton acceptor) is an active-site residue. His24 lines the an anthocyanidin pocket. Catalysis depends on Asp120, which acts as the Charge relay. Thr143 serves as a coordination point for UDP-alpha-D-glucose. The interval 280-281 is UDP; it reads SR. Residues Val343, Gln345, His360, Trp363, Asn364, Ser365, and Glu368 each contribute to the UDP-alpha-D-glucose site. Gly383 contacts an anthocyanidin. Asp384 and Gln385 together coordinate UDP-alpha-D-glucose.

Belongs to the UDP-glycosyltransferase family.

It carries out the reaction a 3'-hydro-2'-hydroxy-beta-oxodihydrochalcone + UDP-alpha-D-glucose = a 3'-(beta-D-glucopyranosyl)-2'-hydroxy-beta-oxodihydrochalcone + UDP + H(+). In terms of biological role, UDP-glucose-dependent glucosyltransferase catalyzing the c-glucosylation of 2-hydroxyflavanones. Acts preferentially on the dibenzoylmethane tautomers formed in equilibrium with 2-hydroxyflavanones. No activity with naringenin or naringenin chalcone. This Oryza sativa subsp. indica (Rice) protein is UDP-glycosyltransferase CGT.